A 494-amino-acid chain; its full sequence is Glutamyl-tRNA(Gln) amidotransferase subunit A (494 aa).

Catalysis depends on charge relay system residues Lys-79 and Ser-159. Ser-183 (acyl-ester intermediate) is an active-site residue.

Belongs to the amidase family. GatA subfamily. As to quaternary structure, heterotrimer of A, B and C subunits.

The enzyme catalyses L-glutamyl-tRNA(Gln) + L-glutamine + ATP + H2O = L-glutaminyl-tRNA(Gln) + L-glutamate + ADP + phosphate + H(+). Functionally, allows the formation of correctly charged Gln-tRNA(Gln) through the transamidation of misacylated Glu-tRNA(Gln) in organisms which lack glutaminyl-tRNA synthetase. The reaction takes place in the presence of glutamine and ATP through an activated gamma-phospho-Glu-tRNA(Gln). The chain is Glutamyl-tRNA(Gln) amidotransferase subunit A from Bartonella henselae (strain ATCC 49882 / DSM 28221 / CCUG 30454 / Houston 1) (Rochalimaea henselae).